Consider the following 250-residue polypeptide: Copper homeostasis protein cutC homolog (250 aa).

The protein belongs to the CutC family.

Its function is as follows. Involved in copper homeostasis. Affects body morphology and length, egg laying and brood size. In Caenorhabditis elegans, this protein is Copper homeostasis protein cutC homolog (cutc-1).